Consider the following 291-residue polypeptide: Bifunctional protein FolD (291 aa).

NADP(+) is bound by residues G165–S167, S190, and I231.

This sequence belongs to the tetrahydrofolate dehydrogenase/cyclohydrolase family. Homodimer.

The catalysed reaction is (6R)-5,10-methylene-5,6,7,8-tetrahydrofolate + NADP(+) = (6R)-5,10-methenyltetrahydrofolate + NADPH. The enzyme catalyses (6R)-5,10-methenyltetrahydrofolate + H2O = (6R)-10-formyltetrahydrofolate + H(+). The protein operates within one-carbon metabolism; tetrahydrofolate interconversion. In terms of biological role, catalyzes the oxidation of 5,10-methylenetetrahydrofolate to 5,10-methenyltetrahydrofolate and then the hydrolysis of 5,10-methenyltetrahydrofolate to 10-formyltetrahydrofolate. The sequence is that of Bifunctional protein FolD from Azoarcus sp. (strain BH72).